A 149-amino-acid chain; its full sequence is Transcription antitermination protein NusB (149 aa).

The protein belongs to the NusB family.

Functionally, involved in transcription antitermination. Required for transcription of ribosomal RNA (rRNA) genes. Binds specifically to the boxA antiterminator sequence of the ribosomal RNA (rrn) operons. The polypeptide is Transcription antitermination protein NusB (Chromobacterium violaceum (strain ATCC 12472 / DSM 30191 / JCM 1249 / CCUG 213 / NBRC 12614 / NCIMB 9131 / NCTC 9757 / MK)).